The chain runs to 137 residues: MGMLSEFKAFAVKGNVVDMAVGIIIGAAFGKIVSSFVGDVIMPPIGLLIGGVDFSDLAITLKAAEGDVPAVVLAYGKFIQTILDFIIVAFAIFMGVKVINRLKREEAVAPTAPPVPSAEETLLTEIRDLLKAQNRQP.

Helical transmembrane passes span 9–29 (AFAVKGNVVDMAVGIIIGAAF) and 79–99 (IQTILDFIIVAFAIFMGVKVI).

The protein belongs to the MscL family. As to quaternary structure, homopentamer.

It is found in the cell inner membrane. In terms of biological role, channel that opens in response to stretch forces in the membrane lipid bilayer. May participate in the regulation of osmotic pressure changes within the cell. The polypeptide is Large-conductance mechanosensitive channel (Pseudomonas entomophila (strain L48)).